The following is a 311-amino-acid chain: Protein lifeguard 3 (311 aa).

Disordered stretches follow at residues 1 to 37 and 50 to 72; these read MSNPSAPPPYEDRNPLYPGPPPPGGYGQPSVLPGGYP and PAGYPQPMPPTHPMPMNYGPGHG. Over residues 53–62 the composition is skewed to pro residues; it reads YPQPMPPTHP. Ser81 and Ser83 each carry phosphoserine. Transmembrane regions (helical) follow at residues 110–130, 134–154, 165–185, 190–210, 221–241, 246–266, and 286–306; these read LLITVAIIAIFTFVEPVSAFV, VAVYYVSYAVFVVTYLILACC, IILLTLFTFAMGFMTGTISSM, AVIIAMIITAVVSISVTIFCF, GLFCVLGIVLLVTGIVTSIVL, VYWLHMLYAALGAICFTLFLA, and ITGALQIYTDIIYIFTFVLQL.

The protein belongs to the BI1 family. LFG subfamily.

Its subcellular location is the membrane. The protein resides in the lysosome membrane. It localises to the endosome membrane. Negatively regulates aortic matrix metalloproteinase-9 (MMP9) production and may play a protective role in vascular remodeling. In Homo sapiens (Human), this protein is Protein lifeguard 3 (TMBIM1).